The following is a 466-amino-acid chain: Cysteine--tRNA ligase (466 aa).

Position 27 (Cys27) interacts with Zn(2+). The 'HIGH' region motif lies at 29 to 39 (PTVYNYFHIGN). Residues Cys207, His232, and Glu236 each contribute to the Zn(2+) site. Residues 264–268 (KMSKS) carry the 'KMSKS' region motif. Lys267 contributes to the ATP binding site.

This sequence belongs to the class-I aminoacyl-tRNA synthetase family. Monomer. Requires Zn(2+) as cofactor.

It localises to the cytoplasm. The enzyme catalyses tRNA(Cys) + L-cysteine + ATP = L-cysteinyl-tRNA(Cys) + AMP + diphosphate. The protein is Cysteine--tRNA ligase of Clostridium novyi (strain NT).